The following is a 132-amino-acid chain: UPF0102 protein Acel_1550 (132 aa).

The protein belongs to the UPF0102 family.

The protein is UPF0102 protein Acel_1550 of Acidothermus cellulolyticus (strain ATCC 43068 / DSM 8971 / 11B).